Reading from the N-terminus, the 257-residue chain is uncharacterized protein (257 aa).

The signal sequence occupies residues 1–22 (MRYLKRLSWYISILILIVVIAG). The N-palmitoyl cysteine moiety is linked to residue Cys23. The S-diacylglycerol cysteine moiety is linked to residue Cys23.

This sequence belongs to the staphylococcal tandem lipoprotein family.

The protein resides in the cell membrane. This is an uncharacterized protein from Staphylococcus aureus (strain N315).